The chain runs to 136 residues: Protein LITTLE ZIPPER 1 (136 aa).

The stretch at 97–122 forms a coiled coil; the sequence is ENQNIIRENEKLKKKALLLHQENKTL.

As to quaternary structure, interacts with REV. As to expression, expressed in the adaxial epidermis of the cotyledons and in the vascular cylinder of wild-type torpedo stage embryos.

Competitive inhibitor of the HD-ZIPIII transcription factors in shoot apical meristem (SAM) development. Acts by forming non-functional heterodimers. Part of a negative feedback loop. Essential for proper functioning of stem cells in the SAM. The protein is Protein LITTLE ZIPPER 1 of Arabidopsis thaliana (Mouse-ear cress).